The primary structure comprises 474 residues: ABHD16B (474 aa).

An AB hydrolase-1 domain is found at 175–293 (VICCEGNAGF…MPQSWKGLVV (119 aa)). Residues S248, D323, and H423 each act as charge relay system in the active site.

The protein belongs to the AB hydrolase superfamily. ABHD16 family.

It carries out the reaction a 1,2-diacyl-sn-glycero-3-phospho-L-serine + H2O = a 2-acyl-sn-glycero-3-phospho-L-serine + a fatty acid + H(+). The enzyme catalyses a 1-acylglycerol + H2O = glycerol + a fatty acid + H(+). It catalyses the reaction 1-(9Z-octadecenoyl)-glycerol + H2O = glycerol + (9Z)-octadecenoate + H(+). Hydrolyzes the sn-1 position of glycerophospholipids with high specificity towards phosphatidylserine (PS), PS-PLA1 enzyme. Also hydrolyzes the acyl chain of glycerolipids with a preference for the monoacylglycerol (MAG) 1-acylglycerol, MAG lipase. Plays a regulatory role in cellular lipid homeostasis by modulating genes involved in neutral lipid degradation and in phospholipid synthesis and composition. The sequence is that of ABHD16B from Rattus norvegicus (Rat).